Here is a 207-residue protein sequence, read N- to C-terminus: dTTP/UTP pyrophosphatase (207 aa).

Catalysis depends on Asp-79, which acts as the Proton acceptor.

Belongs to the Maf family. YhdE subfamily. The cofactor is a divalent metal cation.

It is found in the cytoplasm. It carries out the reaction dTTP + H2O = dTMP + diphosphate + H(+). The enzyme catalyses UTP + H2O = UMP + diphosphate + H(+). In terms of biological role, nucleoside triphosphate pyrophosphatase that hydrolyzes dTTP and UTP. May have a dual role in cell division arrest and in preventing the incorporation of modified nucleotides into cellular nucleic acids. The protein is dTTP/UTP pyrophosphatase of Nitrobacter winogradskyi (strain ATCC 25391 / DSM 10237 / CIP 104748 / NCIMB 11846 / Nb-255).